Reading from the N-terminus, the 135-residue chain is CDGSH iron-sulfur domain-containing protein 2B (135 aa).

The Lumenal portion of the chain corresponds to Met-1–Asp-37. The chain crosses the membrane as a helical span at residues Trp-38–Leu-60. Topologically, residues Pro-61–Leu-135 are cytoplasmic. [2Fe-2S] cluster is bound by residues Cys-99, Cys-101, Cys-110, and His-114.

It belongs to the CISD protein family. CISD2 subfamily. In terms of assembly, homodimer. It depends on [2Fe-2S] cluster as a cofactor.

The protein resides in the endoplasmic reticulum membrane. It is found in the mitochondrion outer membrane. Its function is as follows. Regulator of autophagy that contributes to antagonize becn1-mediated cellular autophagy at the endoplasmic reticulum. Participates in the interaction of bcl2 with becn1 and is required for bcl2-mediated depression of endoplasmic reticulum Ca(2+) stores during autophagy. The chain is CDGSH iron-sulfur domain-containing protein 2B (cisd2b) from Salmo salar (Atlantic salmon).